A 971-amino-acid polypeptide reads, in one-letter code: Exportin-2 (971 aa).

M1 bears the N-acetylmethionine mark. An Importin N-terminal domain is found at 29-102; the sequence is AEKFLESVEG…KANIVHLMLS (74 aa). At S112 the chain carries Phosphoserine. Residues K574 and K824 each carry the N6-acetyllysine modification. S931 carries the post-translational modification Phosphoserine.

It belongs to the XPO2/CSE1 family. Found in a complex with CSE1L/XPO2, Ran and KPNA2. Binds with high affinity to importin-alpha only in the presence of RanGTP. The complex is dissociated by the combined action of RanBP1 and RanGAP1. Interacts with CFTR. Detected in brain, placenta, ovary, testis and trachea (at protein level). Widely expressed. Highly expressed in testis and in proliferating cells.

The protein localises to the cytoplasm. The protein resides in the nucleus. In terms of biological role, export receptor for importin-alpha. Mediates importin-alpha re-export from the nucleus to the cytoplasm after import substrates (cargos) have been released into the nucleoplasm. In the nucleus binds cooperatively to importin-alpha and to the GTPase Ran in its active GTP-bound form. Docking of this trimeric complex to the nuclear pore complex (NPC) is mediated through binding to nucleoporins. Upon transit of a nuclear export complex into the cytoplasm, disassembling of the complex and hydrolysis of Ran-GTP to Ran-GDP (induced by RANBP1 and RANGAP1, respectively) cause release of the importin-alpha from the export receptor. CSE1L/XPO2 then return to the nuclear compartment and mediate another round of transport. The directionality of nuclear export is thought to be conferred by an asymmetric distribution of the GTP- and GDP-bound forms of Ran between the cytoplasm and nucleus. The sequence is that of Exportin-2 (CSE1L) from Homo sapiens (Human).